We begin with the raw amino-acid sequence, 295 residues long: Acetylglutamate kinase (295 aa).

Residues 66–67, Arg-88, and Asn-193 contribute to the substrate site; that span reads GG.

This sequence belongs to the acetylglutamate kinase family. ArgB subfamily.

The protein localises to the cytoplasm. It catalyses the reaction N-acetyl-L-glutamate + ATP = N-acetyl-L-glutamyl 5-phosphate + ADP. It functions in the pathway amino-acid biosynthesis; L-arginine biosynthesis; N(2)-acetyl-L-ornithine from L-glutamate: step 2/4. Its function is as follows. Catalyzes the ATP-dependent phosphorylation of N-acetyl-L-glutamate. The sequence is that of Acetylglutamate kinase from Bradyrhizobium diazoefficiens (strain JCM 10833 / BCRC 13528 / IAM 13628 / NBRC 14792 / USDA 110).